A 105-amino-acid polypeptide reads, in one-letter code: Integration host factor (105 aa).

The H2TH motif, binds DNA signature appears at 64–71 (LPKVGKVK). A lid, binds DNA region spans residues 82–94 (APTRRLRGLGDRQ).

It belongs to the actinobacterial IHF (aIHF) family. Homodimer in solution. Binds DNA as a monomer.

The protein resides in the cytoplasm. A nucleoid-associated protein (NAP) required for septum formation and normal cell division as well as for DNA segregation. Binds about 135 sites across the chromosome, most of which are genes involved in virulence; most DNA-binding sites are immediately upstream of transcription start sites. When mIHF is depleted most of the genes are down-regulated. Binds supercoiled and linear dsDNA in a concentration-dependent manner, probably non-sequence specifically. Binding compacts DNA, protecting it from degradation. Initial binding to supercoiled DNA opens it fully, followed by bending and compaction. Bends and thus compacts linear DNA. Binds DNA via 2 sites, forms left-handed loops on linear DNA; at low concentrations unwinds larger cosmids (42.6 kb) then collapses and condenses DNA as protein levels rise. Forms mostly left-handed loops on condensing cosmid DNA. This chain is Integration host factor, found in Mycobacterium tuberculosis (strain ATCC 25618 / H37Rv).